Reading from the N-terminus, the 245-residue chain is 1-(5-phosphoribosyl)-5-[(5-phosphoribosylamino)methylideneamino] imidazole-4-carboxamide isomerase (245 aa).

The active-site Proton acceptor is aspartate 7. Residue aspartate 129 is the Proton donor of the active site.

Belongs to the HisA/HisF family.

Its subcellular location is the cytoplasm. The catalysed reaction is 1-(5-phospho-beta-D-ribosyl)-5-[(5-phospho-beta-D-ribosylamino)methylideneamino]imidazole-4-carboxamide = 5-[(5-phospho-1-deoxy-D-ribulos-1-ylimino)methylamino]-1-(5-phospho-beta-D-ribosyl)imidazole-4-carboxamide. Its pathway is amino-acid biosynthesis; L-histidine biosynthesis; L-histidine from 5-phospho-alpha-D-ribose 1-diphosphate: step 4/9. This is 1-(5-phosphoribosyl)-5-[(5-phosphoribosylamino)methylideneamino] imidazole-4-carboxamide isomerase from Shewanella baltica (strain OS195).